The chain runs to 61 residues: Small ribosomal subunit protein uS14B (61 aa).

The Zn(2+) site is built by Cys-24, Cys-27, Cys-40, and Cys-43.

Belongs to the universal ribosomal protein uS14 family. Zinc-binding uS14 subfamily. As to quaternary structure, part of the 30S ribosomal subunit. Contacts proteins S3 and S10. The cofactor is Zn(2+).

Its function is as follows. Binds 16S rRNA, required for the assembly of 30S particles and may also be responsible for determining the conformation of the 16S rRNA at the A site. This chain is Small ribosomal subunit protein uS14B, found in Lactiplantibacillus plantarum (strain ATCC BAA-793 / NCIMB 8826 / WCFS1) (Lactobacillus plantarum).